A 159-amino-acid chain; its full sequence is Transcription elongation factor GreA (159 aa).

The protein belongs to the GreA/GreB family.

Necessary for efficient RNA polymerase transcription elongation past template-encoded arresting sites. The arresting sites in DNA have the property of trapping a certain fraction of elongating RNA polymerases that pass through, resulting in locked ternary complexes. Cleavage of the nascent transcript by cleavage factors such as GreA or GreB allows the resumption of elongation from the new 3'terminus. GreA releases sequences of 2 to 3 nucleotides. The protein is Transcription elongation factor GreA of Psychromonas ingrahamii (strain DSM 17664 / CCUG 51855 / 37).